Consider the following 1964-residue polypeptide: Neurogenic locus notch homolog protein 4 (1964 aa).

A signal peptide spans 1–20; that stretch reads MQPQLLLLLLLPLNFPVILT. EGF-like domains follow at residues 21-60, 61-112, 115-152, and 153-189; these read RELLCGGSPEPCANGGTCLRLSRGQGICQCAPGFLGETCQ, FPDP…DRCQ, LEELCPPSFCSNGGHCYVQASGRPQCSCEPGWTGEQCQ, and LRDFCSANPCANGGVCLATYPQIQCRCPPGFEGHTCE. Residues 21 to 1443 are Extracellular-facing; the sequence is RELLCGGSPE…TRPSANQLPW (1423 aa). 95 disulfides stabilise this stretch: Cys25–Cys38, Cys32–Cys48, Cys50–Cys59, Cys65–Cys77, Cys71–Cys100, Cys102–Cys111, Cys119–Cys130, Cys124–Cys140, Cys142–Cys151, Cys157–Cys168, Cys162–Cys177, Cys179–Cys188, Cys195–Cys208, Cys202–Cys217, Cys219–Cys228, Cys235–Cys246, Cys240–Cys259, Cys261–Cys270, Cys277–Cys288, Cys282–Cys297, Cys299–Cys308, Cys315–Cys329, Cys323–Cys338, Cys340–Cys349, Cys356–Cys367, Cys361–Cys376, Cys378–Cys387, Cys393–Cys404, Cys398–Cys415, Cys417–Cys426, Cys433–Cys449, Cys443–Cys458, Cys460–Cys469, Cys476–Cys487, Cys481–Cys496, Cys498–Cys507, Cys514–Cys525, Cys519–Cys534, Cys536–Cys545, Cys552–Cys563, Cys557–Cys572, Cys574–Cys583, Cys590–Cys601, Cys595–Cys610, Cys612–Cys621, Cys626–Cys637, Cys631–Cys646, Cys648–Cys655, Cys662–Cys669, Cys664–Cys674, Cys676–Cys685, Cys692–Cys703, Cys697–Cys712, Cys714–Cys723, Cys730–Cys741, Cys735–Cys750, Cys752–Cys761, Cys768–Cys779, Cys773–Cys788, Cys790–Cys799, Cys807–Cys818, Cys812–Cys827, Cys829–Cys838, Cys845–Cys856, Cys850–Cys865, Cys867–Cys876, Cys882–Cys903, Cys897–Cys912, Cys914–Cys923, Cys930–Cys941, Cys935–Cys950, Cys952–Cys961, Cys968–Cys979, Cys973–Cys988, Cys990–Cys999, Cys1006–Cys1019, Cys1011–Cys1028, Cys1030–Cys1039, Cys1046–Cys1057, Cys1051–Cys1069, Cys1071–Cys1080, Cys1087–Cys1098, Cys1092–Cys1110, Cys1112–Cys1121, Cys1130–Cys1142, Cys1136–Cys1155, Cys1157–Cys1166, Cys1174–Cys1187, Cys1183–Cys1199, Cys1210–Cys1234, Cys1216–Cys1229, Cys1225–Cys1241, Cys1247–Cys1273, Cys1255–Cys1268, and Cys1264–Cys1280. Positions 191–229 constitute an EGF-like 5; calcium-binding domain; it reads DINECFLEPGPCPQGTSCHNTLGSYQCLCPVGQEGPQCK. An EGF-like 6 domain is found at 231-271; sequence RKGACPPGSCLNGGTCQLVPEGHSTFHLCLCPPGFTGLDCE. The region spanning 273–309 is the EGF-like 7; calcium-binding domain; that stretch reads NPDDCVRHQCQNGATCLDGLDTYTCLCPKTWKGWDCS. Positions 311–350 constitute an EGF-like 8; calcium-binding domain; sequence DIDECEARGPPRCRNGGTCQNTAGSFHCVCVSGWGGAGCE. Residues 352–388 enclose the EGF-like 9; calcium-binding domain; it reads NLDDCAAATCAPGSTCIDRVGSFSCLCPPGRTGLLCH. One can recognise an EGF-like 10 domain in the interval 389–427; the sequence is LEDMCLSQPCHVNAQCSTNPLTGSTLCICQPGYSGSTCH. The EGF-like 11; calcium-binding domain occupies 429–470; that stretch reads DLDECQMAQQGPSPCEHGGSCINTPGSFNCLCLPGYTGSRCE. Residues 472–508 form the EGF-like 12; calcium-binding domain; that stretch reads DHNECLSQPCHPGSTCLDLLATFHCLCPPGLEGRLCE. One can recognise an EGF-like 13; calcium-binding domain in the interval 510 to 546; the sequence is EVNECTSNPCLNQAACHDLLNGFQCLCLPGFTGARCE. Positions 548–584 constitute an EGF-like 14; calcium-binding domain; it reads DMDECSSTPCANGGRCRDQPGAFYCECLPGFEGPHCE. One can recognise an EGF-like 15; calcium-binding domain in the interval 586–622; sequence EVDECLSDPCPVGASCLDLPGAFFCLCRPGFTGQLCE. 14 EGF-like domains span residues 623-656, 658-686, 688-724, 726-762, 764-800, 803-839, 841-877, 878-924, 926-962, 964-1000, 1002-1040, 1042-1081, 1083-1122, and 1126-1167; these read VPLCTPNMCQPGQQCQGQEHRAPCLCPDGSPGCV, AEDNCPCHHGHCQRSLCVCDEGWTGPECE, ELGGCISTPCAHGGTCHPQPSGYNCTCPAGYMGLTCS, EVTACHSGPCLNGGSCSIRPEGYSCTCLPSHTGRHCQ, AVDHCVSASCLNGGTCVNKPGTFFCLCATGFQGLHCE, TNPSCADSPCRNKATCQDTPRGARCLCSPGYTGSSCQ, LIDLCARKPCPHTARCLQSGPSFQCLCLQGWTGALCD, FPLS…KLCQ, NVNPCEPNPCHHGSTCVPQPSGYVCQCAPGYEGQNCS, VLDACQSQPCHNHGTCTSRPGGFHCACPPGFVGLRCE, DVDECLDRPCHPSGTAACHSLANAFYCQCLPGHTGQRCE, EMDLCQSQPCSNGGSCEITTGPPPGFTCHCPKGFEGPTCS, KALSCGIHHCHNGGLCLPSPKPGSPPLCACLSGFGGPDCL, and APPG…PRCQ. Asn711 is a glycosylation site (N-linked (GlcNAc...) asparagine). Asn960 carries an N-linked (GlcNAc...) asparagine glycan. Residue Asn1139 is glycosylated (N-linked (GlcNAc...) asparagine). LNR repeat units lie at residues 1166 to 1209, 1210 to 1241, and 1247 to 1287; these read CQRP…PWKG, CPPHSQCWLLFRDGRCHPQCDSEECLFDGYDC, and CIPA…GEDS. The segment at 1345-1369 is disordered; that stretch reads EELSGARDSSSWERQAPPTQPLGKE. A helical transmembrane segment spans residues 1444 to 1464; it reads PILCSPVVGVLLLALGALLVL. Over 1465-1964 the chain is Cytoplasmic; that stretch reads QLIRRRRREH…PLNSVVRNLN (500 aa). A disordered region spans residues 1516-1535; it reads VDEDGVAMCSGPEEGEAEET. ANK repeat units lie at residues 1628–1657, 1661–1691, 1695–1724, 1728–1757, and 1761–1790; these read TGETPLHLAARFSRPTAARRLLEAGANPNQ, AGRTPLHTAVAADAREVCQLLLASRQTTVDA, DGTTPLMLAARLAVEDLVEELIAARADVGA, RGKTALHWAAAVNNARAARSLLQAGADKDA, and REQTPLFLAAREGAVEVAQLLLELGAARGL. Residues 1879-1907 form a disordered region; the sequence is RSGSCGGPTTRGRRFSAGSRGRRGARASQ.

Belongs to the NOTCH family. In terms of assembly, heterodimer of a C-terminal fragment N(TM) and a N-terminal fragment N(EC) which are probably linked by disulfide bonds. Interacts with MAML1, MAML2 and MAML3 which act as transcriptional coactivators for NOTCH4. In terms of processing, synthesized in the endoplasmic reticulum as an inactive form which is proteolytically cleaved by a furin-like convertase in the trans-Golgi network before it reaches the plasma membrane to yield an active, ligand-accessible form. Cleavage results in a C-terminal fragment N(TM) and a N-terminal fragment N(EC). Following ligand binding, it is cleaved by TNF-alpha converting enzyme (TACE) to yield a membrane-associated intermediate fragment called notch extracellular truncation (NEXT). This fragment is then cleaved by presenilin dependent gamma-secretase to release a notch-derived peptide containing the intracellular domain (NICD) from the membrane. Phosphorylated. Highly expressed in lung, moderately in heart kidney, and at lower levels in the ovary and skeletal muscle. A very low expression is seen in the brain, intestine, liver and testis.

It localises to the cell membrane. The protein resides in the nucleus. Its function is as follows. Functions as a receptor for membrane-bound ligands Jagged1, Jagged2 and Delta1 to regulate cell-fate determination. Upon ligand activation through the released notch intracellular domain (NICD) it forms a transcriptional activator complex with RBPJ/RBPSUH and activates genes of the enhancer of split locus. Affects the implementation of differentiation, proliferation and apoptotic programs. May regulate branching morphogenesis in the developing vascular system. This chain is Neurogenic locus notch homolog protein 4, found in Mus musculus (Mouse).